A 336-amino-acid polypeptide reads, in one-letter code: Biotin synthase (336 aa).

One can recognise a Radical SAM core domain in the interval 54–281 (QAIQLSTLLS…KSYVRLSAGR (228 aa)). [4Fe-4S] cluster is bound by residues Cys69, Cys73, and Cys76. Residues Cys113, Cys144, Cys204, and Arg276 each contribute to the [2Fe-2S] cluster site.

This sequence belongs to the radical SAM superfamily. Biotin synthase family. As to quaternary structure, homodimer. Requires [4Fe-4S] cluster as cofactor. [2Fe-2S] cluster serves as cofactor.

The catalysed reaction is (4R,5S)-dethiobiotin + (sulfur carrier)-SH + 2 reduced [2Fe-2S]-[ferredoxin] + 2 S-adenosyl-L-methionine = (sulfur carrier)-H + biotin + 2 5'-deoxyadenosine + 2 L-methionine + 2 oxidized [2Fe-2S]-[ferredoxin]. Its pathway is cofactor biosynthesis; biotin biosynthesis; biotin from 7,8-diaminononanoate: step 2/2. In terms of biological role, catalyzes the conversion of dethiobiotin (DTB) to biotin by the insertion of a sulfur atom into dethiobiotin via a radical-based mechanism. This Actinobacillus pleuropneumoniae serotype 7 (strain AP76) protein is Biotin synthase.